We begin with the raw amino-acid sequence, 605 residues long: F-box/WD repeat-containing protein 1A (605 aa).

Positions 128–177 are homodimerization domain D; the sequence is ASYEKEKELCVKYFEQWSESDQVEFVEHLISQMCHYQHGHINSYLKPMLQ. The F-box domain occupies 190-228; it reads DHIAENILSYLDAKSLCAAELVCKEWYRVTSDGMLWKKL. The segment at 190 to 228 is required for down-regulation of SNAI1; the sequence is DHIAENILSYLDAKSLCAAELVCKEWYRVTSDGMLWKKL. 7 WD repeats span residues 301–338, 341–378, 381–418, 424–461, 464–503, 505–541, and 553–590; these read ETSK…CKRI, GHTG…MLNT, HHCE…DITL, GHRA…FVRT, GHKR…RVLE, HEEL…DPRA, and EHSG…AAQA.

Homodimer. Self-associates. Component of the SCF(BTRC) complex formed of CUL1, SKP1, RBX1 and a BTRC dimer. Direct interaction with SKP1 occurs via the F-box domain. Interacts with phosphorylated ubiquitination substrates SMAD3 and SMAD4. Interacts with phosphorylated ubiquitination substrates CTNNB1, NFKBIA, NFKBIB, NFKBIE, NFKB1/nuclear factor NF-kappa-B p105 subunit, ATF4, CDC25A, DLG1, FBXO5 and SNAI1; the interaction requires the phosphorylation of the 2 serine residues in the substrate destruction motif D-S-G-X(2,3,4)-S. Binds UBQLN1. Interacts with CDC34 and UBE2R2. Interacts with FBXW11. Interacts with CUL4A and DDB1. Part of a SCF(BTRC)-like complex lacking CUL1, which is associated with phosphorylated NKBIA and RELA; RELA interacts directly with NFKBIA. Interacts with the phosphorylated form of GLI3. Interacts with CLU. Interacts with PER1 (phosphorylated), PER2 (phosphorylated) and PER3. Interacts with phosphorylated ubiquitination substrate CEP68. Interacts with ZC3H12A; this interaction occurs when ZC3H12A is phosphorylated in a IKBKB/IKKB-dependent manner. Interacts with HSF1; this interaction occurs during mitosis and induces HSF1 ubiquitin-dependent degradation, a process inhibited by CDC20. Interacts with NFE2L1. Interacts with INAVA. Interacts with IL10RA; this interaction leads to IL10RA ubiquitination and subsequent degradation. Interacts with REST. Interacts with KLF4; this interaction leads to KLF4 ubiquitination and subsequent degradation. Interacts with UBR2, as part of a SCF(BTRC) complex; the interaction mediates 'Lys-48'-linked ubiquitination of UBR2 and is regulated by DUSP22 in the T-cell receptor signaling pathway. In terms of assembly, (Microbial infection) Interacts with vaccinia virus A49; this interaction inhibits NF-kappa-B activation. As to quaternary structure, (Microbial infection) Interacts with HIV-1 Vpu. Post-translationally, ubiquitinated. Deubiquitinated by OTUD5, promoting its stability. In terms of tissue distribution, expressed in epididymis (at protein level).

The protein localises to the cytoplasm. It is found in the nucleus. Its pathway is protein modification; protein ubiquitination. Substrate recognition component of a SCF (SKP1-CUL1-F-box protein) E3 ubiquitin-protein ligase complex which mediates the ubiquitination and subsequent proteasomal degradation of target proteins. Recognizes and binds to phosphorylated target proteins. SCF(BTRC) mediates the ubiquitination of CTNNB1 and participates in Wnt signaling. SCF(BTRC) mediates the ubiquitination of phosphorylated NFKB1, ATF4, CDC25A, DLG1, FBXO5, PER1, SMAD3, SMAD4, SNAI1 and probably NFKB2. SCF(BTRC) mediates the ubiquitination of NFKBIA, NFKBIB and NFKBIE; the degradation frees the associated NFKB1 to translocate into the nucleus and to activate transcription. Ubiquitination of NFKBIA occurs at 'Lys-21' and 'Lys-22'. The SCF(FBXW11) complex also regulates NF-kappa-B by mediating ubiquitination of phosphorylated NFKB1: specifically ubiquitinates the p105 form of NFKB1, leading to its degradation. SCF(BTRC) mediates the ubiquitination of CEP68; this is required for centriole separation during mitosis. SCF(BTRC) mediates the ubiquitination and subsequent degradation of nuclear NFE2L1. Has an essential role in the control of the clock-dependent transcription via degradation of phosphorylated PER1 and PER2. May be involved in ubiquitination and subsequent proteasomal degradation through a DBB1-CUL4 E3 ubiquitin-protein ligase. Required for activation of NFKB-mediated transcription by IL1B, MAP3K14, MAP3K1, IKBKB and TNF. Required for proteolytic processing of GLI3. Mediates ubiquitination of REST, thereby leading to its proteasomal degradation. SCF(BTRC) mediates the ubiquitination and subsequent proteasomal degradation of KLF4; thereby negatively regulating cell pluripotency maintenance and embryogenesis. SCF(BTRC) acts as a regulator of mTORC1 signaling pathway by catalyzing ubiquitination and subsequent proteasomal degradation of phosphorylated DEPTOR, TFE3 and MITF. SCF(BTRC) directs 'Lys-48'-linked ubiquitination of UBR2 in the T-cell receptor signaling pathway. This is F-box/WD repeat-containing protein 1A (BTRC) from Homo sapiens (Human).